The primary structure comprises 263 residues: Endonuclease 8 (263 aa).

Catalysis depends on Pro-2, which acts as the Schiff-base intermediate with DNA. The active-site Proton donor is Glu-3. The active-site Proton donor; for beta-elimination activity is the Lys-53. Positions 70, 125, and 169 each coordinate DNA. The segment at Lys-229–His-263 adopts an FPG-type zinc-finger fold. Arg-253 serves as the catalytic Proton donor; for delta-elimination activity.

The protein belongs to the FPG family. It depends on Zn(2+) as a cofactor.

It carries out the reaction 2'-deoxyribonucleotide-(2'-deoxyribose 5'-phosphate)-2'-deoxyribonucleotide-DNA = a 3'-end 2'-deoxyribonucleotide-(2,3-dehydro-2,3-deoxyribose 5'-phosphate)-DNA + a 5'-end 5'-phospho-2'-deoxyribonucleoside-DNA + H(+). Involved in base excision repair of DNA damaged by oxidation or by mutagenic agents. Acts as a DNA glycosylase that recognizes and removes damaged bases. Has a preference for oxidized pyrimidines, such as thymine glycol, 5,6-dihydrouracil and 5,6-dihydrothymine. Has AP (apurinic/apyrimidinic) lyase activity and introduces nicks in the DNA strand. Cleaves the DNA backbone by beta-delta elimination to generate a single-strand break at the site of the removed base with both 3'- and 5'-phosphates. In Escherichia coli (strain K12 / MC4100 / BW2952), this protein is Endonuclease 8.